Here is a 273-residue protein sequence, read N- to C-terminus: Dermonecrotic toxin LdSicTox-alphaIB3avi (273 aa).

The active site involves His5. Residues Glu25 and Asp27 each coordinate Mg(2+). Catalysis depends on His41, which acts as the Nucleophile. Intrachain disulfides connect Cys45-Cys51 and Cys47-Cys190. Asp85 is a binding site for Mg(2+).

This sequence belongs to the arthropod phospholipase D family. Class II subfamily. Requires Mg(2+) as cofactor. As to expression, expressed by the venom gland.

The protein localises to the secreted. It carries out the reaction an N-(acyl)-sphingosylphosphocholine = an N-(acyl)-sphingosyl-1,3-cyclic phosphate + choline. The enzyme catalyses an N-(acyl)-sphingosylphosphoethanolamine = an N-(acyl)-sphingosyl-1,3-cyclic phosphate + ethanolamine. The catalysed reaction is a 1-acyl-sn-glycero-3-phosphocholine = a 1-acyl-sn-glycero-2,3-cyclic phosphate + choline. It catalyses the reaction a 1-acyl-sn-glycero-3-phosphoethanolamine = a 1-acyl-sn-glycero-2,3-cyclic phosphate + ethanolamine. Dermonecrotic toxins cleave the phosphodiester linkage between the phosphate and headgroup of certain phospholipids (sphingolipid and lysolipid substrates), forming an alcohol (often choline) and a cyclic phosphate. This toxin acts on sphingomyelin (SM). It may also act on ceramide phosphoethanolamine (CPE), lysophosphatidylcholine (LPC) and lysophosphatidylethanolamine (LPE), but not on lysophosphatidylserine (LPS), and lysophosphatidylglycerol (LPG). It acts by transphosphatidylation, releasing exclusively cyclic phosphate products as second products. Induces dermonecrosis, hemolysis, increased vascular permeability, edema, inflammatory response, and platelet aggregation. This Loxosceles deserta (Desert recluse spider) protein is Dermonecrotic toxin LdSicTox-alphaIB3avi.